The following is a 1136-amino-acid chain: Nuclear pore complex protein Nup133 (1136 aa).

A disordered region spans residues 1-26 (MFSPRGTPGSGRRQAPRTGGRRSVSA).

The protein belongs to the nucleoporin Nup133 family. Forms part of the Nup160 subcomplex in the nuclear pore which is composed of NUP160, NUP133, NUP107 and Nup96. This complex plays a role in RNA export and in tethering Nup98 and NUP153 to the nucleus. In terms of tissue distribution, widely expressed in the embryo and in adult tissues. Higher expression is observed in the brain, testes, ovary, skin, and kidney.

Its subcellular location is the nucleus. It localises to the nuclear pore complex. The protein localises to the chromosome. It is found in the centromere. The protein resides in the kinetochore. In terms of biological role, involved in poly(A)+ RNA transport. Involved in nephrogenesis. The chain is Nuclear pore complex protein Nup133 from Danio rerio (Zebrafish).